The following is a 465-amino-acid chain: 3-isopropylmalate dehydratase large subunit (465 aa).

[4Fe-4S] cluster-binding residues include Cys347, Cys407, and Cys410. The segment at 417–443 (TLKPGERSASTSNRNFEGRQGKGGRTH) is disordered.

Belongs to the aconitase/IPM isomerase family. LeuC type 1 subfamily. As to quaternary structure, heterodimer of LeuC and LeuD. The cofactor is [4Fe-4S] cluster.

It catalyses the reaction (2R,3S)-3-isopropylmalate = (2S)-2-isopropylmalate. It functions in the pathway amino-acid biosynthesis; L-leucine biosynthesis; L-leucine from 3-methyl-2-oxobutanoate: step 2/4. Its function is as follows. Catalyzes the isomerization between 2-isopropylmalate and 3-isopropylmalate, via the formation of 2-isopropylmaleate. This is 3-isopropylmalate dehydratase large subunit from Thermobifida fusca (strain YX).